Reading from the N-terminus, the 356-residue chain is Histidinol-phosphate aminotransferase (356 aa).

Lys222 carries the N6-(pyridoxal phosphate)lysine modification.

This sequence belongs to the class-II pyridoxal-phosphate-dependent aminotransferase family. Histidinol-phosphate aminotransferase subfamily. Homodimer. Pyridoxal 5'-phosphate is required as a cofactor.

The catalysed reaction is L-histidinol phosphate + 2-oxoglutarate = 3-(imidazol-4-yl)-2-oxopropyl phosphate + L-glutamate. Its pathway is amino-acid biosynthesis; L-histidine biosynthesis; L-histidine from 5-phospho-alpha-D-ribose 1-diphosphate: step 7/9. The sequence is that of Histidinol-phosphate aminotransferase from Lactiplantibacillus plantarum (strain ATCC BAA-793 / NCIMB 8826 / WCFS1) (Lactobacillus plantarum).